The sequence spans 318 residues: MSNIIKYKKKILNGDLLTKEEVEELLEEDITDLAATANEIRESLCGNKFDLCTIINGKSGRCQENCKYCAQSAHFDTDIIEYNILNSDRIINSAISNYNKGVHRFSVVTSGRALNNNEVDTLCKTYSKLKETCSIRLCASHGLLKYEDLKRLKDSGVTRYHNNLETSRKFFTKICTTHKYDDKIETIKNAKKAGIEICSGGIIGLGETMEDRIDMAFTLRELSVESVPVNILNPIKGTPLENQEILSYEEIIKTLALFRFILPTVQIRLAGGRTIISDKGKKALESGVNGAISGDMLTTLGIETSEDIKMIKNLGFEV.

A Radical SAM core domain is found at 44–273 (LCGNKFDLCT…TVQIRLAGGR (230 aa)). Residues Cys-62, Cys-66, and Cys-69 each contribute to the [4Fe-4S] cluster site. [2Fe-2S] cluster is bound by residues Ser-106, Cys-138, Cys-198, and Arg-268.

Belongs to the radical SAM superfamily. Biotin synthase family. As to quaternary structure, homodimer. [4Fe-4S] cluster is required as a cofactor. The cofactor is [2Fe-2S] cluster.

The enzyme catalyses (4R,5S)-dethiobiotin + (sulfur carrier)-SH + 2 reduced [2Fe-2S]-[ferredoxin] + 2 S-adenosyl-L-methionine = (sulfur carrier)-H + biotin + 2 5'-deoxyadenosine + 2 L-methionine + 2 oxidized [2Fe-2S]-[ferredoxin]. The protein operates within cofactor biosynthesis; biotin biosynthesis; biotin from 7,8-diaminononanoate: step 2/2. In terms of biological role, catalyzes the conversion of dethiobiotin (DTB) to biotin by the insertion of a sulfur atom into dethiobiotin via a radical-based mechanism. This Clostridium botulinum (strain Hall / ATCC 3502 / NCTC 13319 / Type A) protein is Biotin synthase.